A 293-amino-acid polypeptide reads, in one-letter code: Ribosomal protein L11 methyltransferase (293 aa).

Residues threonine 145, glycine 166, aspartate 188, and asparagine 230 each coordinate S-adenosyl-L-methionine.

This sequence belongs to the methyltransferase superfamily. PrmA family.

The protein localises to the cytoplasm. The enzyme catalyses L-lysyl-[protein] + 3 S-adenosyl-L-methionine = N(6),N(6),N(6)-trimethyl-L-lysyl-[protein] + 3 S-adenosyl-L-homocysteine + 3 H(+). Functionally, methylates ribosomal protein L11. The sequence is that of Ribosomal protein L11 methyltransferase from Salmonella newport (strain SL254).